The primary structure comprises 167 residues: Large ribosomal subunit protein uL23 (167 aa).

The tract at residues 1–118 (MNVNEIIKGP…TEEKAKIAKK (118 aa)) is large ribosomal subunit protein uL23. 2 disordered regions span residues 91-112 (FEDE…TEEK) and 136-167 (KQAE…NSAN). Composition is skewed to basic and acidic residues over residues 97–112 (QDQK…TEEK) and 136–157 (KQAE…RIEN). Residues 119–167 (KAELEAKNKEIAEKLAKKQAELAKKDSETNENQEKRIENQTENQENSAN) form a unknown region. Positions 158-167 (QTENQENSAN) are enriched in polar residues.

Belongs to the universal ribosomal protein uL23 family. Part of the 50S ribosomal subunit. Contacts protein L29, and trigger factor when it is bound to the ribosome.

One of the early assembly proteins it binds 23S rRNA. One of the proteins that surrounds the polypeptide exit tunnel on the outside of the ribosome. Forms the main docking site for trigger factor binding to the ribosome. This Mesomycoplasma hyopneumoniae (strain J / ATCC 25934 / NCTC 10110) (Mycoplasma hyopneumoniae) protein is Large ribosomal subunit protein uL23.